The sequence spans 757 residues: LPS-assembly protein LptD (757 aa).

Residues 1 to 21 (MRRLIPIAITGSLLWGAAVQA) form the signal peptide.

It belongs to the LptD family. In terms of assembly, component of the lipopolysaccharide transport and assembly complex. Interacts with LptE and LptA.

Its subcellular location is the cell outer membrane. Its function is as follows. Together with LptE, is involved in the assembly of lipopolysaccharide (LPS) at the surface of the outer membrane. The sequence is that of LPS-assembly protein LptD from Alkalilimnicola ehrlichii (strain ATCC BAA-1101 / DSM 17681 / MLHE-1).